A 709-amino-acid polypeptide reads, in one-letter code: Polyribonucleotide nucleotidyltransferase (709 aa).

Residues Asp486 and Asp492 each contribute to the Mg(2+) site. Positions 553 to 612 (PRIHTIKINPDKIKDVIGKGGSVIRALTEETGTTIEIEDDGTVKIAATDGEKAKHAISRI) constitute a KH domain. In terms of domain architecture, S1 motif spans 622–690 (ARIYTGKVTR…RQGRVRLSIK (69 aa)).

It belongs to the polyribonucleotide nucleotidyltransferase family. In terms of assembly, component of the RNA degradosome, which is a multiprotein complex involved in RNA processing and mRNA degradation. It depends on Mg(2+) as a cofactor.

The protein localises to the cytoplasm. The enzyme catalyses RNA(n+1) + phosphate = RNA(n) + a ribonucleoside 5'-diphosphate. Functionally, involved in mRNA degradation. Catalyzes the phosphorolysis of single-stranded polyribonucleotides processively in the 3'- to 5'-direction. The chain is Polyribonucleotide nucleotidyltransferase from Photorhabdus laumondii subsp. laumondii (strain DSM 15139 / CIP 105565 / TT01) (Photorhabdus luminescens subsp. laumondii).